The following is a 178-amino-acid chain: Protein PilI (178 aa).

Residues 34–173 form the CheW-like domain; it reads SWSGIGFRMG…PHALAQHQGF (140 aa).

Its function is as follows. May be a part of a signal-transduction system that regulates twitching motility by controlling pilus function (extension and retraction). This is Protein PilI (pilI) from Pseudomonas aeruginosa (strain ATCC 15692 / DSM 22644 / CIP 104116 / JCM 14847 / LMG 12228 / 1C / PRS 101 / PAO1).